A 349-amino-acid polypeptide reads, in one-letter code: Cbb3-type cytochrome c oxidase subunit CcoP (349 aa).

The disordered stretch occupies residues 1 to 67 (MADTDDEHAS…RVVRDRKGGR (67 aa)). Residues 1–96 (MADTDDEHAS…NPLPRWWLWT (96 aa)) lie on the Cytoplasmic side of the membrane. The segment covering 16 to 30 (NRIELERQAADEAHK) has biased composition (basic and acidic residues). The chain crosses the membrane as a helical span at residues 97-117 (FYATIVWGVLYLIAYPAIPLV). The Periplasmic portion of the chain corresponds to 118–349 (NGATQGLLGQ…AYVHSLGGGE (232 aa)). Cytochrome c domains follow at residues 168 to 258 (YTAN…LELG) and 265 to 346 (ALAA…HSLG). Positions 181, 184, 185, 233, 278, 281, 282, and 323 each coordinate heme c.

Belongs to the CcoP / FixP family. Component of the cbb3-type cytochrome c oxidase at least composed of CcoN, CcoO, CcoQ and CcoP. Requires heme c as cofactor.

It is found in the cell inner membrane. Its pathway is energy metabolism; oxidative phosphorylation. Its function is as follows. C-type cytochrome. Part of the cbb3-type cytochrome c oxidase complex. CcoP subunit is required for transferring electrons from donor cytochrome c via its heme groups to CcoO subunit. From there, electrons are shuttled to the catalytic binuclear center of CcoN subunit where oxygen reduction takes place. The complex also functions as a proton pump. In Paracoccus denitrificans (strain Pd 1222), this protein is Cbb3-type cytochrome c oxidase subunit CcoP.